Reading from the N-terminus, the 259-residue chain is Small ribosomal subunit protein mS23 (259 aa).

This sequence belongs to the mitochondrion-specific ribosomal protein mS23 family. Component of the mitochondrial small ribosomal subunit.

It localises to the mitochondrion. This is Small ribosomal subunit protein mS23 (RSM25) from Pyricularia oryzae (strain 70-15 / ATCC MYA-4617 / FGSC 8958) (Rice blast fungus).